A 141-amino-acid polypeptide reads, in one-letter code: MINAKKLMKMAKKWQQRAALHRKRISFQRSSVFTSSSSTVEKGCFVVYTADKIRFAFPISYLSNSVVQELLKISEEDFGLPTEGPITLPFDSAFLEYLVKLIQRRMDEDTEKALLLSISSARCSFQPQEQQCSTTQQLLVF.

This sequence belongs to the ARG7 family. As to expression, expressed in hypocotyls, cotyledons, petioles, young rosette leaves, apical portion of inflorescence stems, stamen filaments and petals.

Its subcellular location is the cell membrane. In terms of biological role, may promote auxin-stimulated organ elongation, such as hypocotyls, stamen filaments and petals. The sequence is that of Auxin-responsive protein SAUR63 from Arabidopsis thaliana (Mouse-ear cress).